The primary structure comprises 269 residues: Formamidopyrimidine-DNA glycosylase (269 aa).

Pro2 (schiff-base intermediate with DNA) is an active-site residue. Glu3 acts as the Proton donor in catalysis. Residue Lys57 is the Proton donor; for beta-elimination activity of the active site. Residues His90, Arg109, and Lys150 each coordinate DNA. The FPG-type zinc finger occupies 235–269 (RVYGRNGEPCRTCGTPIETAKHGQRSTFFCRRCQV). The active-site Proton donor; for delta-elimination activity is Arg259.

The protein belongs to the FPG family. Monomer. Zn(2+) is required as a cofactor.

It carries out the reaction Hydrolysis of DNA containing ring-opened 7-methylguanine residues, releasing 2,6-diamino-4-hydroxy-5-(N-methyl)formamidopyrimidine.. It catalyses the reaction 2'-deoxyribonucleotide-(2'-deoxyribose 5'-phosphate)-2'-deoxyribonucleotide-DNA = a 3'-end 2'-deoxyribonucleotide-(2,3-dehydro-2,3-deoxyribose 5'-phosphate)-DNA + a 5'-end 5'-phospho-2'-deoxyribonucleoside-DNA + H(+). In terms of biological role, involved in base excision repair of DNA damaged by oxidation or by mutagenic agents. Acts as a DNA glycosylase that recognizes and removes damaged bases. Has a preference for oxidized purines, such as 7,8-dihydro-8-oxoguanine (8-oxoG). Has AP (apurinic/apyrimidinic) lyase activity and introduces nicks in the DNA strand. Cleaves the DNA backbone by beta-delta elimination to generate a single-strand break at the site of the removed base with both 3'- and 5'-phosphates. The chain is Formamidopyrimidine-DNA glycosylase from Pectobacterium atrosepticum (strain SCRI 1043 / ATCC BAA-672) (Erwinia carotovora subsp. atroseptica).